Here is a 103-residue protein sequence, read N- to C-terminus: uncharacterized protein (103 aa).

This is an uncharacterized protein from Escherichia coli (strain UTI89 / UPEC).